Here is a 114-residue protein sequence, read N- to C-terminus: Probable gas vesicle protein J2 (114 aa).

Positions 1–10 (MTDLDHRYPG) are enriched in basic and acidic residues. Residues 1-21 (MTDLDHRYPGEETEPYGPPSG) are disordered.

This sequence belongs to the gas vesicle GvpA family. As to quaternary structure, interacts with GvpA.

The protein localises to the gas vesicle. A minor component of the gas vesicle, might be involved in nucleating gas vesicle formation. Gas vesicles (GV) are hollow, gas filled proteinaceous nanostructures. It is not clear what function GVs perform in soil bacteria. This chain is Probable gas vesicle protein J2, found in Streptomyces coelicolor (strain ATCC BAA-471 / A3(2) / M145).